The primary structure comprises 146 residues: MKLHELQPAPGSRKKAVRVGRGIGSGNGKTAGRGHKGQKARSGGGVRLGFEGGQTPLFRRLPKRGFTNINRKEYAVVNLDRLNIFEDGTEVTPELLLEKGVISKLKSGVKILGKGQIEKKLTVKAHKFSASAKEAIEAAGGKTEVI.

The segment at 1-46 is disordered; sequence MKLHELQPAPGSRKKAVRVGRGIGSGNGKTAGRGHKGQKARSGGGV. Residues 21-31 are compositionally biased toward gly residues; the sequence is RGIGSGNGKTA.

This sequence belongs to the universal ribosomal protein uL15 family. As to quaternary structure, part of the 50S ribosomal subunit.

Binds to the 23S rRNA. The sequence is that of Large ribosomal subunit protein uL15 from Geobacillus thermodenitrificans (strain NG80-2).